We begin with the raw amino-acid sequence, 615 residues long: 1-deoxy-D-xylulose-5-phosphate synthase (615 aa).

Residues His-72 and 111 to 113 each bind thiamine diphosphate; that span reads GHS. Residue Asp-142 coordinates Mg(2+). Thiamine diphosphate contacts are provided by residues 143 to 144, Asn-171, Tyr-278, and Glu-360; that span reads GA. Asn-171 is a Mg(2+) binding site.

Belongs to the transketolase family. DXPS subfamily. In terms of assembly, homodimer. Mg(2+) serves as cofactor. It depends on thiamine diphosphate as a cofactor.

It carries out the reaction D-glyceraldehyde 3-phosphate + pyruvate + H(+) = 1-deoxy-D-xylulose 5-phosphate + CO2. It functions in the pathway metabolic intermediate biosynthesis; 1-deoxy-D-xylulose 5-phosphate biosynthesis; 1-deoxy-D-xylulose 5-phosphate from D-glyceraldehyde 3-phosphate and pyruvate: step 1/1. In terms of biological role, catalyzes the acyloin condensation reaction between C atoms 2 and 3 of pyruvate and glyceraldehyde 3-phosphate to yield 1-deoxy-D-xylulose-5-phosphate (DXP). This Campylobacter jejuni subsp. jejuni serotype O:6 (strain 81116 / NCTC 11828) protein is 1-deoxy-D-xylulose-5-phosphate synthase.